The following is a 324-amino-acid chain: Spheroidene monooxygenase (324 aa).

Positions Gly226 to Ala324 are disordered. Low complexity-rich tracts occupy residues Pro248 to Pro278 and Val287 to Gly313.

This sequence belongs to the CrtA family. Heme is required as a cofactor.

The catalysed reaction is spheroidene + 4 reduced [2Fe-2S]-[ferredoxin] + 2 O2 + 4 H(+) = spheroiden-2-one + 4 oxidized [2Fe-2S]-[ferredoxin] + 3 H2O. It catalyses the reaction spheroidene + 2 reduced [2Fe-2S]-[ferredoxin] + O2 + 2 H(+) = 2-hydroxyspheroidene + 2 oxidized [2Fe-2S]-[ferredoxin] + H2O. The enzyme catalyses 2-hydroxyspheroidene + 2 reduced [2Fe-2S]-[ferredoxin] + O2 + 2 H(+) = 2,2-dihydroxyspheroidene + 2 oxidized [2Fe-2S]-[ferredoxin] + H2O. It carries out the reaction 2,2-dihydroxyspheroidene = spheroiden-2-one + H2O. It functions in the pathway carotenoid biosynthesis; spheroidene biosynthesis. Its function is as follows. Involved in the biosynthesis of the carotenoid spheroidene. Catalyzes the introduction of one keto group at the C-2 position of spheroidene. In vitro, can use nonnative substrates and produce oxocarotenoids with a hydroxy and/or a keto group, derived from neurosporene, lycopene, 3,4-didehydrolycopene or 3,4,3',4'-tetradehydrolycopene. This is Spheroidene monooxygenase from Cereibacter sphaeroides (strain ATCC 17023 / DSM 158 / JCM 6121 / CCUG 31486 / LMG 2827 / NBRC 12203 / NCIMB 8253 / ATH 2.4.1.) (Rhodobacter sphaeroides).